The primary structure comprises 172 residues: Stellate orphon protein at 12D (172 aa).

The protein belongs to the casein kinase 2 subunit beta family. Interacts in vitro with the casein kinase 2 alpha subunit (CkII-alpha). The relevance of such interaction is however unclear in vivo. Probably not expressed in wild-type flies. In males lacking the Y chromosome, it is testis-specific and constitutes the main component of star-shaped crystals.

Unknown. In males lacking the Y chromosome, its strong overexpression leads to the appearance of proteinaceous star-shaped crystals in the primary spermatocytes causing meiotic drive, possibly by interfering with normal casein kinase 2 activity. The protein is Stellate orphon protein at 12D (Ste12DOR) of Drosophila melanogaster (Fruit fly).